Consider the following 166-residue polypeptide: Interferon gamma (166 aa).

The first 23 residues, 1 to 23 (MNYTTICLAFQLCVIFCSSGYYC), serve as a signal peptide directing secretion. Gln-24 is modified (pyrrolidone carboxylic acid). N-linked (GlcNAc...) asparagine glycans are attached at residues Asn-39, Asn-106, and Asn-107.

Belongs to the type II (or gamma) interferon family. As to quaternary structure, homodimer. Interacts with IFNGR1 (via extracellular domain); this interaction promotes IFNGR1 dimerization.

The protein resides in the secreted. Type II interferon produced by immune cells such as T-cells and NK cells that plays crucial roles in antimicrobial, antiviral, and antitumor responses by activating effector immune cells and enhancing antigen presentation. Primarily signals through the JAK-STAT pathway after interaction with its receptor IFNGR1 to affect gene regulation. Upon IFNG binding, IFNGR1 intracellular domain opens out to allow association of downstream signaling components JAK2, JAK1 and STAT1, leading to STAT1 activation, nuclear translocation and transcription of IFNG-regulated genes. Many of the induced genes are transcription factors such as IRF1 that are able to further drive regulation of a next wave of transcription. Plays a role in class I antigen presentation pathway by inducing a replacement of catalytic proteasome subunits with immunoproteasome subunits. In turn, increases the quantity, quality, and repertoire of peptides for class I MHC loading. Increases the efficiency of peptide generation also by inducing the expression of activator PA28 that associates with the proteasome and alters its proteolytic cleavage preference. Up-regulates as well MHC II complexes on the cell surface by promoting expression of several key molecules such as cathepsins B/CTSB, H/CTSH, and L/CTSL. Participates in the regulation of hematopoietic stem cells during development and under homeostatic conditions by affecting their development, quiescence, and differentiation. The chain is Interferon gamma (IFNG) from Mustela putorius furo (European domestic ferret).